Reading from the N-terminus, the 502-residue chain is Glutamate dehydrogenase, mitochondrial (502 aa).

Residue 96–98 (HHR) participates in NAD(+) binding. Substrate is bound by residues lysine 102 and lysine 126. Aspartate 131 serves as a coordination point for NAD(+). Lysine 138 is a catalytic residue. Serine 394 serves as a coordination point for substrate.

The protein belongs to the Glu/Leu/Phe/Val dehydrogenases family. In terms of assembly, homohexamer.

It localises to the mitochondrion matrix. The enzyme catalyses L-glutamate + NAD(+) + H2O = 2-oxoglutarate + NH4(+) + NADH + H(+). It catalyses the reaction L-glutamate + NADP(+) + H2O = 2-oxoglutarate + NH4(+) + NADPH + H(+). With respect to regulation, subject to allosteric regulation. Activated by AMP and ADP. The polypeptide is Glutamate dehydrogenase, mitochondrial (gluD) (Dictyostelium discoideum (Social amoeba)).